The primary structure comprises 506 residues: Histidine ammonia-lyase (506 aa).

The segment at residues 143–145 is a cross-link (5-imidazolinone (Ala-Gly)); it reads ASG. A 2,3-didehydroalanine (Ser) modification is found at Ser-144.

Belongs to the PAL/histidase family. Post-translationally, contains an active site 4-methylidene-imidazol-5-one (MIO), which is formed autocatalytically by cyclization and dehydration of residues Ala-Ser-Gly.

Its subcellular location is the cytoplasm. It carries out the reaction L-histidine = trans-urocanate + NH4(+). The protein operates within amino-acid degradation; L-histidine degradation into L-glutamate; N-formimidoyl-L-glutamate from L-histidine: step 1/3. This chain is Histidine ammonia-lyase, found in Salmonella schwarzengrund (strain CVM19633).